A 208-amino-acid polypeptide reads, in one-letter code: Protein late bloomer (208 aa).

4 helical membrane passes run 10–30 (IASI…IGWI), 41–61 (FVIA…LGIF), 67–87 (SVVL…LQIV), and 174–194 (FIIV…LAVF).

This sequence belongs to the tetraspanin (TM4SF) family. As to expression, transiently expressed on motor axons, growth cones and terminal arbors.

Its subcellular location is the membrane. It is found in the synapse. Facilitates synapse formation. This chain is Protein late bloomer (lbm), found in Drosophila melanogaster (Fruit fly).